The following is a 418-amino-acid chain: Glutamyl-tRNA reductase (418 aa).

Substrate contacts are provided by residues 49–52, Ser109, 114–116, and Gln120; these read TCNR and EPQ. Cys50 (nucleophile) is an active-site residue. 189–194 lines the NADP(+) pocket; it reads GAGETI.

Belongs to the glutamyl-tRNA reductase family. Homodimer.

The catalysed reaction is (S)-4-amino-5-oxopentanoate + tRNA(Glu) + NADP(+) = L-glutamyl-tRNA(Glu) + NADPH + H(+). It functions in the pathway porphyrin-containing compound metabolism; protoporphyrin-IX biosynthesis; 5-aminolevulinate from L-glutamyl-tRNA(Glu): step 1/2. Catalyzes the NADPH-dependent reduction of glutamyl-tRNA(Glu) to glutamate 1-semialdehyde (GSA). This Escherichia coli O1:K1 / APEC protein is Glutamyl-tRNA reductase.